Consider the following 517-residue polypeptide: Putative pumilio homolog 21 (517 aa).

Disordered stretches follow at residues 33 to 57 (NHQE…PPLL), 69 to 94 (KNNQ…PPLV), 107 to 130 (NHQE…PLLT), and 175 to 201 (FTPS…PPLS). Low complexity predominate over residues 42-51 (NTNINSNNNH). Residues 69–84 (KNNQEPGESGNTTINR) show a composition bias toward polar residues. The PUM-HD domain occupies 148 to 502 (ESSNNNYPNL…NTLRVIQEEI (355 aa)). The span at 177–190 (PSSLTQPDDSSSRY) shows a compositional bias: polar residues. The stretch at 258-293 (TTKRIFLHLATNQYGSQALRILFRRSPSLDHLLFCA) is one Pumilio 1; degenerate repeat. Residues 294–328 (VDTNFFLLMSDKYGRGLIIPAIRAVDKTKKESLYK) form a Pumilio 2 repeat. The Pumilio 3; degenerate repeat unit spans residues 329–363 (LTYEYTLHLARLETGCLALNNVLQEIRGIYRDLIF). Pumilio repeat units follow at residues 364-400 (ECVA…AIAE), 401-437 (RLRG…EEFR), and 438-473 (GNAK…PLLR).

The protein resides in the cytoplasm. Functionally, sequence-specific RNA-binding protein that regulates translation and mRNA stability by binding the 3'-UTR of target mRNAs. The protein is Putative pumilio homolog 21 (APUM21) of Arabidopsis thaliana (Mouse-ear cress).